The chain runs to 400 residues: Na(+)/H(+) antiporter NhaA (400 aa).

Transmembrane regions (helical) follow at residues 26-46 (AGGI…NSPL), 71-91 (LIHW…GMEV), 107-127 (IFPA…YWFI), 137-157 (GWAI…ALLS), 166-186 (IFLL…IALF), 189-209 (HGLS…LILL), 212-232 (FKVS…ASVL), 233-253 (KSGV…PLKG), 273-293 (FVIL…GIDV), 299-319 (PLLL…IFGF), 340-360 (IFAV…LASL), and 373-393 (LSRL…YLFL).

Belongs to the NhaA Na(+)/H(+) (TC 2.A.33) antiporter family.

The protein localises to the cell inner membrane. It carries out the reaction Na(+)(in) + 2 H(+)(out) = Na(+)(out) + 2 H(+)(in). Its function is as follows. Na(+)/H(+) antiporter that extrudes sodium in exchange for external protons. This chain is Na(+)/H(+) antiporter NhaA, found in Haemophilus influenzae (strain PittEE).